The following is a 236-amino-acid chain: 2-C-methyl-D-erythritol 4-phosphate cytidylyltransferase (236 aa).

The protein belongs to the IspD/TarI cytidylyltransferase family. IspD subfamily. Homodimer.

The enzyme catalyses 2-C-methyl-D-erythritol 4-phosphate + CTP + H(+) = 4-CDP-2-C-methyl-D-erythritol + diphosphate. Its pathway is isoprenoid biosynthesis; isopentenyl diphosphate biosynthesis via DXP pathway; isopentenyl diphosphate from 1-deoxy-D-xylulose 5-phosphate: step 2/6. Catalyzes the formation of 4-diphosphocytidyl-2-C-methyl-D-erythritol from CTP and 2-C-methyl-D-erythritol 4-phosphate (MEP). In Escherichia coli O17:K52:H18 (strain UMN026 / ExPEC), this protein is 2-C-methyl-D-erythritol 4-phosphate cytidylyltransferase.